Here is a 174-residue protein sequence, read N- to C-terminus: Protein GrpE (174 aa).

The segment at 1–35 is disordered; sequence MAQDIKNEEVEEVQEEEVVETAEETTPEKSELDLA. Over residues 9–25 the composition is skewed to acidic residues; the sequence is EVEEVQEEEVVETAEET. The segment covering 26 to 35 has biased composition (basic and acidic residues); that stretch reads TPEKSELDLA.

The protein belongs to the GrpE family. As to quaternary structure, homodimer.

The protein resides in the cytoplasm. Participates actively in the response to hyperosmotic and heat shock by preventing the aggregation of stress-denatured proteins, in association with DnaK and GrpE. It is the nucleotide exchange factor for DnaK and may function as a thermosensor. Unfolded proteins bind initially to DnaJ; upon interaction with the DnaJ-bound protein, DnaK hydrolyzes its bound ATP, resulting in the formation of a stable complex. GrpE releases ADP from DnaK; ATP binding to DnaK triggers the release of the substrate protein, thus completing the reaction cycle. Several rounds of ATP-dependent interactions between DnaJ, DnaK and GrpE are required for fully efficient folding. The polypeptide is Protein GrpE (Streptococcus pneumoniae (strain ATCC 700669 / Spain 23F-1)).